The primary structure comprises 703 residues: Polyribonucleotide nucleotidyltransferase (703 aa).

Mg(2+) is bound by residues aspartate 486 and aspartate 492. A KH domain is found at 554–613 (PKIITTNIDPEKIRDVIGPGGKMINKIIAETGVKIDIEEDGRVYILTPDSAAAQKALKII). The region spanning 623 to 691 (GEVYLGKVVR…KQGRINLSRK (69 aa)) is the S1 motif domain.

The protein belongs to the polyribonucleotide nucleotidyltransferase family. Mg(2+) is required as a cofactor.

The protein localises to the cytoplasm. The catalysed reaction is RNA(n+1) + phosphate = RNA(n) + a ribonucleoside 5'-diphosphate. Its function is as follows. Involved in mRNA degradation. Catalyzes the phosphorolysis of single-stranded polyribonucleotides processively in the 3'- to 5'-direction. This is Polyribonucleotide nucleotidyltransferase from Ruminiclostridium cellulolyticum (strain ATCC 35319 / DSM 5812 / JCM 6584 / H10) (Clostridium cellulolyticum).